The sequence spans 207 residues: MARYTGPKAKLSRREGTDLFLKSARRSLADKCKLDSKPGQHGRTSGARTSDYGNQLREKQKVKRIYGVLERQFRRYFAEADRRKGNTGETLLQLLESRLDNVVYRMGFGSTRAEARQLVSHKAILVNGQALNVPSAQVKSGDVIAIREKSKKQVRIAESLTLAEQSGFPIWVAVDAKKMEGTFKQAPDRADIAGDINESLIVELYSR.

A disordered region spans residues K33–N54. A compositionally biased stretch (polar residues) spans G42–G53. The 61-residue stretch at S97 to A157 folds into the S4 RNA-binding domain.

The protein belongs to the universal ribosomal protein uS4 family. Part of the 30S ribosomal subunit. Contacts protein S5. The interaction surface between S4 and S5 is involved in control of translational fidelity.

One of the primary rRNA binding proteins, it binds directly to 16S rRNA where it nucleates assembly of the body of the 30S subunit. Its function is as follows. With S5 and S12 plays an important role in translational accuracy. This Ralstonia pickettii (strain 12J) protein is Small ribosomal subunit protein uS4.